Consider the following 197-residue polypeptide: Putative protein N5-glutamine methyltransferase MJ0928 (197 aa).

Residues Gly42–Gly46, Asp64, and Asn105 contribute to the S-adenosyl-L-methionine site. Substrate is bound at residue Asn105–Tyr108.

It belongs to the eukaryotic/archaeal PrmC-related family.

The catalysed reaction is L-glutaminyl-[protein] + S-adenosyl-L-methionine = N(5)-methyl-L-glutaminyl-[protein] + S-adenosyl-L-homocysteine + H(+). In terms of biological role, putative protein methyltransferase using S-adenosyl-L-methionine as the methyl donor. May methylate a Gln residue in target proteins. This chain is Putative protein N5-glutamine methyltransferase MJ0928, found in Methanocaldococcus jannaschii (strain ATCC 43067 / DSM 2661 / JAL-1 / JCM 10045 / NBRC 100440) (Methanococcus jannaschii).